The sequence spans 209 residues: 8-oxoguanine DNA glycosylase/AP lyase (209 aa).

Residues Lys132 and Asp150 contribute to the active site.

It belongs to the type-2 OGG1 family.

The enzyme catalyses 2'-deoxyribonucleotide-(2'-deoxyribose 5'-phosphate)-2'-deoxyribonucleotide-DNA = a 3'-end 2'-deoxyribonucleotide-(2,3-dehydro-2,3-deoxyribose 5'-phosphate)-DNA + a 5'-end 5'-phospho-2'-deoxyribonucleoside-DNA + H(+). Functionally, catalyzes the excision of an oxidatively damaged form of guanine (7,8-dihydro-8-oxoguanine = 8-oxoG) from DNA. Also cleaves the DNA backbone at apurinic/apyrimidinic sites (AP sites). This is 8-oxoguanine DNA glycosylase/AP lyase from Picrophilus torridus (strain ATCC 700027 / DSM 9790 / JCM 10055 / NBRC 100828 / KAW 2/3).